We begin with the raw amino-acid sequence, 77 residues long: Secapin (77 aa).

An N-terminal signal peptide occupies residues 1 to 32; sequence MKNYSKNATYLITVLLFSFVAMLLIIPSKCEA. The propeptide occupies 33–52; the sequence is VSNDMQPLEARSADLVPEPR. The cysteines at positions 61 and 72 are disulfide-linked.

The protein belongs to the secapin family. In terms of tissue distribution, expressed by the venom gland.

It localises to the secreted. In terms of biological role, nontoxic peptide. In Vespa magnifica (Hornet), this protein is Secapin.